Consider the following 204-residue polypeptide: MGAYKYLEELERKKQSDVLRFLQRVRVWEYRQKNVIHRAARPTRPDKARRLGYKAKQGFVIYRVRVRRGNRKRPVPKGATYGKPTNQGVNELKYQRSLRATAEERVGRRAANLRVLNSYWVNQDSTYKYFEVILVDPQHKAIRRDARYNWICNPVHKHREARGLTATGKKSRGINKGHKFNNTKAGRRKTWKRQNTLSLWRYRK.

Positions 165–185 (TATGKKSRGINKGHKFNNTKA) are disordered. The span at 169–185 (KKSRGINKGHKFNNTKA) shows a compositional bias: basic residues.

This sequence belongs to the eukaryotic ribosomal protein eL15 family. Component of the large ribosomal subunit (LSU). Mature yeast ribosomes consist of a small (40S) and a large (60S) subunit. The 40S small subunit contains 1 molecule of ribosomal RNA (18S rRNA) and 33 different proteins (encoded by 57 genes). The large 60S subunit contains 3 rRNA molecules (25S, 5.8S and 5S rRNA) and 46 different proteins (encoded by 81 genes).

It localises to the cytoplasm. In terms of biological role, component of the ribosome, a large ribonucleoprotein complex responsible for the synthesis of proteins in the cell. The small ribosomal subunit (SSU) binds messenger RNAs (mRNAs) and translates the encoded message by selecting cognate aminoacyl-transfer RNA (tRNA) molecules. The large subunit (LSU) contains the ribosomal catalytic site termed the peptidyl transferase center (PTC), which catalyzes the formation of peptide bonds, thereby polymerizing the amino acids delivered by tRNAs into a polypeptide chain. The nascent polypeptides leave the ribosome through a tunnel in the LSU and interact with protein factors that function in enzymatic processing, targeting, and the membrane insertion of nascent chains at the exit of the ribosomal tunnel. The polypeptide is Large ribosomal subunit protein eL15B (Saccharomyces cerevisiae (strain ATCC 204508 / S288c) (Baker's yeast)).